A 244-amino-acid polypeptide reads, in one-letter code: Methylthioribulose-1-phosphate dehydratase (244 aa).

Position 89 (cysteine 89) interacts with substrate. The Zn(2+) site is built by histidine 107 and histidine 109. The active-site Proton donor/acceptor is glutamate 130. Histidine 192 serves as a coordination point for Zn(2+).

This sequence belongs to the aldolase class II family. MtnB subfamily. The cofactor is Zn(2+).

It is found in the cytoplasm. It carries out the reaction 5-(methylsulfanyl)-D-ribulose 1-phosphate = 5-methylsulfanyl-2,3-dioxopentyl phosphate + H2O. It participates in amino-acid biosynthesis; L-methionine biosynthesis via salvage pathway; L-methionine from S-methyl-5-thio-alpha-D-ribose 1-phosphate: step 2/6. Its function is as follows. Catalyzes the dehydration of methylthioribulose-1-phosphate (MTRu-1-P) into 2,3-diketo-5-methylthiopentyl-1-phosphate (DK-MTP-1-P). The protein is Methylthioribulose-1-phosphate dehydratase of Saccharomyces cerevisiae (strain ATCC 204508 / S288c) (Baker's yeast).